We begin with the raw amino-acid sequence, 467 residues long: Phosphomethylpyrimidine synthase (467 aa).

Substrate-binding positions include Asn-80, Met-109, Tyr-139, His-175, 195–197, 236–239, and Glu-275; these read SRG and DSLR. Residue His-279 coordinates Zn(2+). Position 302 (Tyr-302) interacts with substrate. His-343 lines the Zn(2+) pocket. [4Fe-4S] cluster-binding residues include Cys-423, Cys-426, and Cys-431.

The protein belongs to the ThiC family. [4Fe-4S] cluster serves as cofactor.

The enzyme catalyses 5-amino-1-(5-phospho-beta-D-ribosyl)imidazole + S-adenosyl-L-methionine = 4-amino-2-methyl-5-(phosphooxymethyl)pyrimidine + CO + 5'-deoxyadenosine + formate + L-methionine + 3 H(+). It functions in the pathway cofactor biosynthesis; thiamine diphosphate biosynthesis. Catalyzes the synthesis of the hydroxymethylpyrimidine phosphate (HMP-P) moiety of thiamine from aminoimidazole ribotide (AIR) in a radical S-adenosyl-L-methionine (SAM)-dependent reaction. In Synechococcus sp. (strain WH7803), this protein is Phosphomethylpyrimidine synthase.